The primary structure comprises 353 residues: Phospho-N-acetylmuramoyl-pentapeptide-transferase (353 aa).

Helical transmembrane passes span 13 to 33, 66 to 86, 88 to 108, 130 to 150, 162 to 182, 193 to 213, 229 to 249, 256 to 276, 281 to 301, and 330 to 350; these read ILGYITIRAGIAFFLALFFTL, TPTMGGIVFIFATILASLISI, FSNLYAVGAVLTLIFFSIIGF, LILQTTFALIISIFLYTLSDF, PLFDMGIFAIFFWVIVIIATS, GLATVPSITALASFSIIIYIT, IGEVAIVSSALIGALSGFLWY, VFMGDSGSLTIGAFLGYLAII, ILLLLIGSIFVIETLSVILQV, and KIIVRFWIIATLSNVIALITL.

It belongs to the glycosyltransferase 4 family. MraY subfamily. Mg(2+) is required as a cofactor.

Its subcellular location is the cell inner membrane. It carries out the reaction UDP-N-acetyl-alpha-D-muramoyl-L-alanyl-gamma-D-glutamyl-meso-2,6-diaminopimeloyl-D-alanyl-D-alanine + di-trans,octa-cis-undecaprenyl phosphate = di-trans,octa-cis-undecaprenyl diphospho-N-acetyl-alpha-D-muramoyl-L-alanyl-D-glutamyl-meso-2,6-diaminopimeloyl-D-alanyl-D-alanine + UMP. It functions in the pathway cell wall biogenesis; peptidoglycan biosynthesis. Catalyzes the initial step of the lipid cycle reactions in the biosynthesis of the cell wall peptidoglycan: transfers peptidoglycan precursor phospho-MurNAc-pentapeptide from UDP-MurNAc-pentapeptide onto the lipid carrier undecaprenyl phosphate, yielding undecaprenyl-pyrophosphoryl-MurNAc-pentapeptide, known as lipid I. This chain is Phospho-N-acetylmuramoyl-pentapeptide-transferase, found in Sulfurimonas denitrificans (strain ATCC 33889 / DSM 1251) (Thiomicrospira denitrificans (strain ATCC 33889 / DSM 1251)).